We begin with the raw amino-acid sequence, 339 residues long: Ketol-acid reductoisomerase (NADP(+)) (339 aa).

Residues 1–182 form the KARI N-terminal Rossmann domain; the sequence is MRVYYDRDAD…GGGRAGIIET (182 aa). NADP(+) is bound by residues 24–27, arginine 48, serine 51, threonine 53, and 83–86; these read YGSQ and DELQ. Histidine 108 is a catalytic residue. Glycine 134 contributes to the NADP(+) binding site. The region spanning 183-328 is the KARI C-terminal knotted domain; it reads TFREECETDL…AKLRAMMPWI (146 aa). 4 residues coordinate Mg(2+): aspartate 191, glutamate 195, glutamate 227, and glutamate 231. Serine 252 is a binding site for substrate.

Belongs to the ketol-acid reductoisomerase family. Mg(2+) is required as a cofactor.

It carries out the reaction (2R)-2,3-dihydroxy-3-methylbutanoate + NADP(+) = (2S)-2-acetolactate + NADPH + H(+). It catalyses the reaction (2R,3R)-2,3-dihydroxy-3-methylpentanoate + NADP(+) = (S)-2-ethyl-2-hydroxy-3-oxobutanoate + NADPH + H(+). It functions in the pathway amino-acid biosynthesis; L-isoleucine biosynthesis; L-isoleucine from 2-oxobutanoate: step 2/4. It participates in amino-acid biosynthesis; L-valine biosynthesis; L-valine from pyruvate: step 2/4. In terms of biological role, involved in the biosynthesis of branched-chain amino acids (BCAA). Catalyzes an alkyl-migration followed by a ketol-acid reduction of (S)-2-acetolactate (S2AL) to yield (R)-2,3-dihydroxy-isovalerate. In the isomerase reaction, S2AL is rearranged via a Mg-dependent methyl migration to produce 3-hydroxy-3-methyl-2-ketobutyrate (HMKB). In the reductase reaction, this 2-ketoacid undergoes a metal-dependent reduction by NADPH to yield (R)-2,3-dihydroxy-isovalerate. This chain is Ketol-acid reductoisomerase (NADP(+)), found in Methylocella silvestris (strain DSM 15510 / CIP 108128 / LMG 27833 / NCIMB 13906 / BL2).